We begin with the raw amino-acid sequence, 436 residues long: Lactonohydrolase oryL (436 aa).

An N-terminal signal peptide occupies residues methionine 1–serine 27.

This sequence belongs to the SMP-30/CGR1 family.

Its pathway is secondary metabolite biosynthesis. Its function is as follows. Lactonohydrolase; part of the gene cluster that mediates the biosynthesis of oryzines, natural products with an unusual maleidride backbone. The two subunits of the fungal fatty acid synthase oryfasA and oryfasB probably form octenoic acid. This fatty acid is most likely activated by the acyl-CoA ligase oryP to give octenyl-CoA before the citrate synthase-like protein oryE catalyzes condensation with oxaloacetate to form tricarboxylic acid. The next steps of the pathways are conjectural, but a favorite possible route has been proposed, beginning with decarboxylation and concomitant dehydration by the decarboxylase oryM, followed by tautomerization, which may lead to the production of a diene intermediate. Reduction of this diene intermediate could give the known metabolite piliformic acid. On the pathway to oryzine B and oryzine A, however, hydroxylation of the diene by the alpha-ketoglutarate-dependent dioxygenase oryG and lactonisation by the lactonohydrolases oryH or oryL could give oryzine B directly. Finally, enoyl reduction by the dehydrogenase oryD would then convert oryzine B into oryzine A. In Aspergillus oryzae (strain ATCC 42149 / RIB 40) (Yellow koji mold), this protein is Lactonohydrolase oryL.